Consider the following 95-residue polypeptide: UPF0358 protein BT9727_3692 (95 aa).

The protein belongs to the UPF0358 family.

The polypeptide is UPF0358 protein BT9727_3692 (Bacillus thuringiensis subsp. konkukian (strain 97-27)).